A 375-amino-acid polypeptide reads, in one-letter code: Chaperone protein DnaJ (375 aa).

In terms of domain architecture, J spans 5-70; that stretch reads DYYEILGISK…EKRAAYDQYG (66 aa). Residues 130–208 form a CR-type zinc finger; sequence GIIKEICIPT…CHGNGRVERS (79 aa). 8 residues coordinate Zn(2+): C143, C146, C160, C163, C182, C185, C196, and C199. 4 CXXCXGXG motif repeats span residues 143-150, 160-167, 182-189, and 196-203; these read CEKCRGTG, CMTCHGQG, CPTCHGHG, and CNKCHGNG.

The protein belongs to the DnaJ family. As to quaternary structure, homodimer. Zn(2+) serves as cofactor.

The protein resides in the cytoplasm. In terms of biological role, participates actively in the response to hyperosmotic and heat shock by preventing the aggregation of stress-denatured proteins and by disaggregating proteins, also in an autonomous, DnaK-independent fashion. Unfolded proteins bind initially to DnaJ; upon interaction with the DnaJ-bound protein, DnaK hydrolyzes its bound ATP, resulting in the formation of a stable complex. GrpE releases ADP from DnaK; ATP binding to DnaK triggers the release of the substrate protein, thus completing the reaction cycle. Several rounds of ATP-dependent interactions between DnaJ, DnaK and GrpE are required for fully efficient folding. Also involved, together with DnaK and GrpE, in the DNA replication of plasmids through activation of initiation proteins. The protein is Chaperone protein DnaJ of Blochmanniella pennsylvanica (strain BPEN).